The sequence spans 537 residues: Phosphoenolpyruvate carboxykinase (ATP) (537 aa).

Positions 61, 195, and 201 each coordinate substrate. Residues Lys201, His220, and 236 to 244 contribute to the ATP site; that span reads GLSGTGKTT. Residues Lys201 and His220 each contribute to the Mn(2+) site. Mn(2+) is bound at residue Asp257. ATP is bound by residues Glu285, Arg323, and Thr448. Residue Arg323 coordinates substrate.

The protein belongs to the phosphoenolpyruvate carboxykinase (ATP) family. It depends on Mn(2+) as a cofactor.

The protein resides in the cytoplasm. It carries out the reaction oxaloacetate + ATP = phosphoenolpyruvate + ADP + CO2. It functions in the pathway carbohydrate biosynthesis; gluconeogenesis. In terms of biological role, involved in the gluconeogenesis. Catalyzes the conversion of oxaloacetate (OAA) to phosphoenolpyruvate (PEP) through direct phosphoryl transfer between the nucleoside triphosphate and OAA. The sequence is that of Phosphoenolpyruvate carboxykinase (ATP) from Rhodopseudomonas palustris (strain BisA53).